A 241-amino-acid chain; its full sequence is Pyridoxine/pyridoxamine 5'-phosphate oxidase (241 aa).

The tract at residues 1 to 35 is disordered; the sequence is MASNPPSAASPRRTAVSPGADRPDGPDPAGQRQSY. Substrate is bound by residues 32–35 and Lys92; that span reads RQSY. FMN-binding positions include 87 to 92, 102 to 103, Arg108, Lys109, and Gln131; these read RTVLLK and YT. The substrate site is built by Tyr149, Arg153, and Ser157. Residues 166–167 and Trp212 each bind FMN; that span reads QS. 218-220 contacts substrate; the sequence is RLH. Residue Arg222 coordinates FMN.

The protein belongs to the pyridoxamine 5'-phosphate oxidase family. As to quaternary structure, homodimer. FMN is required as a cofactor.

The catalysed reaction is pyridoxamine 5'-phosphate + O2 + H2O = pyridoxal 5'-phosphate + H2O2 + NH4(+). It carries out the reaction pyridoxine 5'-phosphate + O2 = pyridoxal 5'-phosphate + H2O2. It participates in cofactor metabolism; pyridoxal 5'-phosphate salvage; pyridoxal 5'-phosphate from pyridoxamine 5'-phosphate: step 1/1. The protein operates within cofactor metabolism; pyridoxal 5'-phosphate salvage; pyridoxal 5'-phosphate from pyridoxine 5'-phosphate: step 1/1. Catalyzes the oxidation of either pyridoxine 5'-phosphate (PNP) or pyridoxamine 5'-phosphate (PMP) into pyridoxal 5'-phosphate (PLP). The chain is Pyridoxine/pyridoxamine 5'-phosphate oxidase from Frankia alni (strain DSM 45986 / CECT 9034 / ACN14a).